An 857-amino-acid polypeptide reads, in one-letter code: Dynein regulatory complex protein 11 (857 aa).

Positions 206-235 constitute an IQ domain; the sequence is TKLAALQIQKVWRGFHQCKKTVKEREEEMV. Residues 348–388 form a disordered region; that stretch reads EEKLKKKKKKEDKENKGKKGKKEKKEKKEKKVSLKEKAMKD. The span at 365 to 375 shows a compositional bias: basic residues; it reads KKGKKEKKEKK. The segment covering 376–387 has biased composition (basic and acidic residues); sequence EKKVSLKEKAMK. An ATP-binding site is contributed by 598 to 605; that stretch reads GPSGVGKK. The segment at 834–857 is disordered; that stretch reads SLTVGNKEKEKDKGKKGKRGKKKK. Over residues 847–857 the composition is skewed to basic residues; sequence GKKGKRGKKKK.

Belongs to the AAA ATPase family. DRC11 subfamily. As to quaternary structure, component of the nexin-dynein regulatory complex (N-DRC).

It is found in the cytoplasm. Its subcellular location is the cytoskeleton. It localises to the flagellum axoneme. In terms of biological role, component of the nexin-dynein regulatory complex (N-DRC), a key regulator of ciliary/flagellar motility which maintains the alignment and integrity of the distal axoneme and regulates microtubule sliding in motile axonemes. The sequence is that of Dynein regulatory complex protein 11 (Iqca1) from Mus musculus (Mouse).